A 434-amino-acid chain; its full sequence is Epimerase FSL3 (434 aa).

125 to 126 (GF) contacts substrate. The active-site Proton acceptor is Glu392.

Belongs to the aldose epimerase family. As to quaternary structure, monomer.

It participates in secondary metabolite biosynthesis. Functionally, epimerase; part of the gene cluster that mediates the biosynthesis of fusarielins F, G and H, decaketide compounds with 5 methylations and a decaline core that act as mycoestrogens as they stimulate growth of MCF-7 breast cancer cells. The initial compound in the pathway is produced by the reducing polyketide synthase FSL1. FSL1 lacks an active enoyl reductase (ER) domain and biosynthesis of fusarielins relies on the trans-acting enoyl reductase FSL5, before it is released through hydrolysis catalyzed by the thioesterase FSL2. Fusarielins F, G, and H have a C11=C12 cis double bond and is fully reduced between C10 and C11 and between C12 and C13. FSL3 can be involved in the formation of the C11=C12 cis double bond by moving a hypothetical C10=C11 or C12=C13 trans double bond to form prefusarielin. Prefusarielin is oxygenated at C15 and C16 by the cytochrome P450 monooxygenase FSL4, resulting in fusarielin F, which subsequently is epoxidized into fusarielin G by the same enzyme. The final step in the pathway is a reduction of the carboxylic acid moiety to yield fusarielin H via a still undetermined mechanism. The sequence is that of Epimerase FSL3 from Gibberella zeae (strain ATCC MYA-4620 / CBS 123657 / FGSC 9075 / NRRL 31084 / PH-1) (Wheat head blight fungus).